A 180-amino-acid polypeptide reads, in one-letter code: Small ribosomal subunit protein uS5 (180 aa).

The S5 DRBM domain maps to 13 to 76; sequence LEERVVQINR…EAAKKNLIRV (64 aa).

This sequence belongs to the universal ribosomal protein uS5 family. In terms of assembly, part of the 30S ribosomal subunit. Contacts proteins S4 and S8.

With S4 and S12 plays an important role in translational accuracy. In terms of biological role, located at the back of the 30S subunit body where it stabilizes the conformation of the head with respect to the body. This Roseiflexus sp. (strain RS-1) protein is Small ribosomal subunit protein uS5.